The chain runs to 540 residues: MENLCDKCSSVIYSKEYHQCLANSTTRNFIVCNSTTINYDSLTMKQLCELANGGNKQVQKIILDRIQFFSYGSVPHRYIEFKKWEYFMDKIPHNQNYVRLYLCWIYYNCMEIDGSIIAHIKNLAKMCNIDAQTNYGLVNEYGIGVKKNIKKAIKWYKLSCYKENLFGLLFLGSLYERGYGVSCDKHMAFNLYEKATKHNYPAVKRQLAFMYRTGSGTTKNINKSHELYREAANQGYPLAQYALALQCKYGHGCIKNYKEAETWLIRSYNNGCLYATYSLARLYIETKSPLRNYSRAFELMQEAASENYLLAINYLAKIYKNGIGVNKNISRAIYWYYKAGNSTKITELLEINNSVIINTLDCNIFTCLDSIENEILFDIQLYILKYKYGDKCDYNLQLYQQLETIVFECIKLRNALDKSSALTTCLKPITKEYRDELSKFTIDTDVFVKHYYFNKQTYMTFGKANVKLSDDIIFFLSKKPYINIVNKLICLNKTNIDTVKDIKSINSKLQKYANLFVRYIEETVNIRNTMFQIKFSFIFR.

Sel1-like repeat units lie at residues isoleucine 129 to asparagine 164, leucine 165 to tyrosine 200, proline 201 to tyrosine 236, proline 237 to cysteine 272, leucine 273 to tyrosine 308, and leucine 309 to lysine 344.

The sequence is that of Putative sel1-like repeat-containing protein R815 from Acanthamoeba polyphaga (Amoeba).